Reading from the N-terminus, the 933-residue chain is Protein inturned (933 aa).

The tract at residues 1–54 is disordered; sequence MASLPLCGSVRSPEGLPGDPSSQEDRQDYDPEDPVSGSGSYSPTSTDSNDLEPE. The span at 37-48 shows a compositional bias: polar residues; that stretch reads GSGSYSPTSTDS. In terms of domain architecture, PDZ spans 186–264; it reads LVGIIHQTKW…PMQVKLTFEN (79 aa). A Phosphoserine modification is found at Ser675. The tract at residues 703-742 is disordered; the sequence is LKTRKPSPSRSGGPDSGLEGEGVGLSPHTTESQGSHGSEE. Positions 710–719 are enriched in low complexity; sequence PSRSGGPDSG. Polar residues predominate over residues 729–738; it reads PHTTESQGSH.

This sequence belongs to the inturned family. In terms of assembly, component of the CPLANE (ciliogenesis and planar polarity effectors) complex, composed of INTU, FUZ and WDPCP. Interacts with CPLANE1. Interacts with NPHP4 and DAAM1; INTU is mediating the interaction between NPHP4 and DAAM1.

The protein resides in the cytoplasm. Its subcellular location is the cell surface. The protein localises to the cytoskeleton. It localises to the cilium basal body. It is found in the microtubule organizing center. The protein resides in the centrosome. Its subcellular location is the centriole. Functionally, plays a key role in ciliogenesis and embryonic development. Regulator of cilia formation by controlling the organization of the apical actin cytoskeleton and the positioning of the basal bodies at the apical cell surface, which in turn is essential for the normal orientation of elongating ciliary microtubules. Plays a key role in definition of cell polarity via its role in ciliogenesis but not via conversion extension. Has an indirect effect on hedgehog signaling. Proposed to function as core component of the CPLANE (ciliogenesis and planar polarity effectors) complex involved in the recruitment of peripheral IFT-A proteins to basal bodies. Required for recruitment of CPLANE2 to the mother centriole. Binds phosphatidylinositol 3-phosphate with highest affinity, followed by phosphatidylinositol 4-phosphate and phosphatidylinositol 5-phosphate. The polypeptide is Protein inturned (INTU) (Bos taurus (Bovine)).